Reading from the N-terminus, the 416-residue chain is UDP-N-acetylglucosamine 1-carboxyvinyltransferase (416 aa).

Position 22–23 (22–23) interacts with phosphoenolpyruvate; that stretch reads KN. Position 91 (Arg91) interacts with UDP-N-acetyl-alpha-D-glucosamine. Residue Cys115 is the Proton donor of the active site. At Cys115 the chain carries 2-(S-cysteinyl)pyruvic acid O-phosphothioketal. UDP-N-acetyl-alpha-D-glucosamine is bound by residues 120 to 124, Asp305, and Ile327; that span reads RPIDL.

The protein belongs to the EPSP synthase family. MurA subfamily.

Its subcellular location is the cytoplasm. The catalysed reaction is phosphoenolpyruvate + UDP-N-acetyl-alpha-D-glucosamine = UDP-N-acetyl-3-O-(1-carboxyvinyl)-alpha-D-glucosamine + phosphate. It participates in cell wall biogenesis; peptidoglycan biosynthesis. Functionally, cell wall formation. Adds enolpyruvyl to UDP-N-acetylglucosamine. In Buchnera aphidicola subsp. Acyrthosiphon pisum (strain 5A), this protein is UDP-N-acetylglucosamine 1-carboxyvinyltransferase.